The primary structure comprises 235 residues: Rab-like protein 3 (235 aa).

Positions Met1–Asp235 are small GTPase-like. GTP is bound by residues Gly16 to Ser21, Lys148 to Asp150, and Asp179 to Cys180.

This sequence belongs to the small GTPase superfamily. Rab family. Homodimer.

Functionally, required for KRAS signaling regulation and modulation of cell proliferation. Regulator of KRAS prenylation, and probably prenylation of other small GTPases. Required for lymphocyte development and function. Not required for myeloid cell development. The sequence is that of Rab-like protein 3 (rabl3) from Xenopus laevis (African clawed frog).